Here is a 132-residue protein sequence, read N- to C-terminus: MSMTDNVADMLTRIRNAYKSKLINVSFPSSKIKISILDVLQKEGYIKDYITTQKNNISYTEVALKYSVNGDASICEIHRVSKPGKRVYSPIKDLKGYYNNMGIYILSTPYGVMSDREAHIKNVGGEVICKVF.

This sequence belongs to the universal ribosomal protein uS8 family. Part of the 30S ribosomal subunit. Contacts proteins S5 and S12.

Its function is as follows. One of the primary rRNA binding proteins, it binds directly to 16S rRNA central domain where it helps coordinate assembly of the platform of the 30S subunit. In Rickettsia massiliae (strain Mtu5), this protein is Small ribosomal subunit protein uS8.